We begin with the raw amino-acid sequence, 302 residues long: MTKVNMKVNIAGVELKNPVMTASGTFGSGREYGEYVDLNQLGAVVVKGVANEPWKGNPSPRIAETYGGMLNSVGLQNPGVDEFIEKDIPFLRQYNTKIIVNIAGRTIEDYCEVVKKLGDADVDLLELNISCPNVKAGGVCFGTDPFMVEEVTKAVKKVAKQPLIVKLTPNVTDIVPIAKAAVAGGADGISLINTLLGMAIDIHKRKPILANVMGGFSGPAIKPVALRMVYQVANAVDVPIIGMGGIMTGEDAVEFILAGASGVAVGTANFINPRATIDVIEGIQGYMEQYSIKDLKEIRGSL.

FMN is bound by residues serine 23 and 47 to 48 (KG). Residues lysine 47 and 71–75 (NSVGL) contribute to the substrate site. FMN is bound by residues asparagine 101 and asparagine 128. Asparagine 128 provides a ligand contact to substrate. Cysteine 131 (nucleophile) is an active-site residue. Residues lysine 166 and isoleucine 192 each contribute to the FMN site. Residue 193–194 (NT) coordinates substrate. Residues glycine 218, 244 to 245 (GG), and 266 to 267 (GT) each bind FMN.

It belongs to the dihydroorotate dehydrogenase family. Type 1 subfamily. Heterotetramer of 2 PyrK and 2 PyrD type B subunits. FMN is required as a cofactor.

It localises to the cytoplasm. It carries out the reaction (S)-dihydroorotate + NAD(+) = orotate + NADH + H(+). It functions in the pathway pyrimidine metabolism; UMP biosynthesis via de novo pathway; orotate from (S)-dihydroorotate (NAD(+) route): step 1/1. Functionally, catalyzes the conversion of dihydroorotate to orotate with NAD(+) as electron acceptor. The protein is Dihydroorotate dehydrogenase B (NAD(+)), catalytic subunit (pyrD) of Alkaliphilus metalliredigens (strain QYMF).